A 302-amino-acid polypeptide reads, in one-letter code: MDEYTKIEKIGEGTYGVVYKGRHKATGQVVAMKKIRLENEEEGVPSTAIREISLLKELQHPNIVCLLDVLMQDSRLYLIFEFLSMDLKKYLDSIPSGQYIDTMLVKSYLYQILQGIVFCHSRRVLHRDLKPQNLLIDNKGVIKLADFGLARAFGIPVRVYTHEVVTLWYRASEVLLGSVRYSTPVDVWSVGTIFAEIATKKPLFHGDSEIDQLFRIFRSLGTPNNEVWPEVESLQDYKNTFPKWKGGSLSSNVKNIDEDGLDLLSKMLVYDPAKRISARKAMLHPYFDDLDKSSLPANQIRN.

In terms of domain architecture, Protein kinase spans 4–287 (YTKIEKIGEG…ARKAMLHPYF (284 aa)). ATP contacts are provided by residues 10 to 18 (IGEGTYGVV) and K33. T14 bears the Phosphothreonine mark. Phosphotyrosine; by wee1 and wee2 is present on Y15. D128 (proton acceptor) is an active-site residue. The residue at position 161 (T161) is a Phosphothreonine; by cak. S277 carries the post-translational modification Phosphoserine.

The protein belongs to the protein kinase superfamily. CMGC Ser/Thr protein kinase family. CDC2/CDKX subfamily. Forms a stable but non-covalent complex with a regulatory subunit and with a cyclin. Interacts with spdya. In terms of processing, phosphorylation at Tyr-15 by wee1 and wee2 inhibits the protein kinase activity and acts negative regulator of entry into mitosis (G2 to M transition).

It is found in the nucleus. The enzyme catalyses L-seryl-[protein] + ATP = O-phospho-L-seryl-[protein] + ADP + H(+). It catalyses the reaction L-threonyl-[protein] + ATP = O-phospho-L-threonyl-[protein] + ADP + H(+). The catalysed reaction is [DNA-directed RNA polymerase] + ATP = phospho-[DNA-directed RNA polymerase] + ADP + H(+). With respect to regulation, phosphorylation at Thr-14 or Tyr-15 inactivates the enzyme, while phosphorylation at Thr-161 activates it. Its function is as follows. Plays a key role in the control of the eukaryotic cell cycle by modulating the centrosome cycle as well as mitotic onset; promotes G2-M transition via association with multiple interphase cyclins. During G2 and early mitosis, CDC25A/B/C-mediated dephosphorylation activates CDK1/cyclin complexes which phosphorylate several substrates that trigger at least centrosome separation, Golgi dynamics, nuclear envelope breakdown and chromosome condensation. Once chromosomes are condensed and aligned at the metaphase plate, CDK1 activity is switched off by WEE1- and PKMYT1-mediated phosphorylation to allow sister chromatid separation, chromosome decondensation, reformation of the nuclear envelope and cytokinesis. Catalyzes lamin (LMNA, LMNB1 and LMNB2) phosphorylation at the onset of mitosis, promoting nuclear envelope breakdown. This chain is Cyclin-dependent kinase 1-B (cdk1-b), found in Xenopus laevis (African clawed frog).